We begin with the raw amino-acid sequence, 563 residues long: Methylcrotonoyl-CoA carboxylase beta chain, mitochondrial (563 aa).

The transit peptide at 1-22 directs the protein to the mitochondrion; the sequence is MWAVLRLALRPCARASPAGPRA. The CoA carboxyltransferase N-terminal domain occupies 49–306; the sequence is MKALVNQLHE…QKKLDVTIEP (258 aa). The interval 49-555 is carboxyltransferase; the sequence is MKALVNQLHE…SAALNAPIEK (507 aa). Lys-70 carries the N6-acetyllysine; alternate modification. Residue Lys-70 is modified to N6-succinyllysine; alternate. The residue at position 141 (Lys-141) is an N6-succinyllysine. The 247-residue stretch at 309-555 folds into the CoA carboxyltransferase C-terminal domain; sequence EPLFPADELY…SAALNAPIEK (247 aa). The interval 343 to 372 is acyl-CoA binding; that stretch reads RFTEFKAFYGDTLVTGFARIFGYPVGIVGN. Lys-495 is modified (N6-acetyllysine; alternate). Lys-495 carries the post-translational modification N6-succinyllysine; alternate. Position 511 is an N6-acetyllysine (Lys-511).

The protein belongs to the AccD/PCCB family. As to quaternary structure, probably a dodecamer composed of six biotin-containing alpha subunits (MCCC1) and six beta (MCCC2) subunits.

The protein resides in the mitochondrion matrix. The catalysed reaction is 3-methylbut-2-enoyl-CoA + hydrogencarbonate + ATP = 3-methyl-(2E)-glutaconyl-CoA + ADP + phosphate + H(+). The protein operates within amino-acid degradation; L-leucine degradation; (S)-3-hydroxy-3-methylglutaryl-CoA from 3-isovaleryl-CoA: step 2/3. Carboxyltransferase subunit of the 3-methylcrotonyl-CoA carboxylase, an enzyme that catalyzes the conversion of 3-methylcrotonyl-CoA to 3-methylglutaconyl-CoA, a critical step for leucine and isovaleric acid catabolism. This chain is Methylcrotonoyl-CoA carboxylase beta chain, mitochondrial (MCCC2), found in Homo sapiens (Human).